Reading from the N-terminus, the 651-residue chain is Mediator of RNA polymerase II transcription subunit 17 (651 aa).

The disordered stretch occupies residues 51 to 83 (QGSGSEEEEAAGAEGDAQDWAGAGSSADQDDEE). The span at 62 to 74 (GAEGDAQDWAGAG) shows a compositional bias: low complexity.

It belongs to the Mediator complex subunit 17 family. In terms of assembly, component of the Mediator complex, which is composed of MED1, MED4, MED6, MED7, MED8, MED9, MED10, MED11, MED12, MED13, MED13L, MED14, MED15, MED16, MED17, MED18, MED19, MED20, MED21, MED22, MED23, MED24, MED25, MED26, MED27, MED29, MED30, MED31, CCNC, CDK8 and CDC2L6/CDK11. The MED12, MED13, CCNC and CDK8 subunits form a distinct module termed the CDK8 module. Mediator containing the CDK8 module is less active than Mediator lacking this module in supporting transcriptional activation. Individual preparations of the Mediator complex lacking one or more distinct subunits have been variously termed ARC, CRSP, DRIP, PC2, SMCC and TRAP. Interacts with GATA1, PPARG and STAT2.

It is found in the nucleus. Component of the Mediator complex, a coactivator involved in the regulated transcription of nearly all RNA polymerase II-dependent genes. Mediator functions as a bridge to convey information from gene-specific regulatory proteins to the basal RNA polymerase II transcription machinery. Mediator is recruited to promoters by direct interactions with regulatory proteins and serves as a scaffold for the assembly of a functional preinitiation complex with RNA polymerase II and the general transcription factors. The polypeptide is Mediator of RNA polymerase II transcription subunit 17 (MED17) (Bos taurus (Bovine)).